Consider the following 506-residue polypeptide: Ent-kaurenoic acid oxidase (506 aa).

The chain crosses the membrane as a helical span at residues 11–31 (AWAAGDLWVLAAAVVAGVVLV). C451 is a heme binding site.

Belongs to the cytochrome P450 family. Heme serves as cofactor. In terms of tissue distribution, expressed in roots and panicles. Expressed at low levels in vegetative shoot apices, leaf sheaths, leaf blades and stems.

It is found in the endoplasmic reticulum membrane. It carries out the reaction ent-kaur-16-en-19-oate + 3 reduced [NADPH--hemoprotein reductase] + 3 O2 = gibberellin A12 + 3 oxidized [NADPH--hemoprotein reductase] + 4 H2O + 4 H(+). The catalysed reaction is ent-kaur-16-en-19-oate + reduced [NADPH--hemoprotein reductase] + O2 = ent-7alpha-hydroxykaur-16-en-19-oate + oxidized [NADPH--hemoprotein reductase] + H2O + H(+). The enzyme catalyses ent-7alpha-hydroxykaur-16-en-19-oate + reduced [NADPH--hemoprotein reductase] + O2 = gibberellin A12 aldehyde + oxidized [NADPH--hemoprotein reductase] + 2 H2O + H(+). It catalyses the reaction gibberellin A12 aldehyde + reduced [NADPH--hemoprotein reductase] + O2 = gibberellin A12 + oxidized [NADPH--hemoprotein reductase] + H2O + 2 H(+). The protein operates within plant hormone biosynthesis; gibberellin biosynthesis. In terms of biological role, involved in gibberellin (GA) biosynthesis. Catalyzes three successive oxidations of ent-kaurenoic acid giving gibberellin 12 (GA12), a key step in GAs biosynthesis. GAs, which are involved many processes, including stem elongation, play a central role in plant development. Required for pollen germination and elongation. In Oryza sativa subsp. japonica (Rice), this protein is Ent-kaurenoic acid oxidase.